Reading from the N-terminus, the 472-residue chain is PEP-dependent dihydroxyacetone kinase, phosphoryl donor subunit DhaM (472 aa).

Positions 1–135 (MVNLVIVSHS…NALEAKRVQL (135 aa)) constitute a PTS EIIA type-4 domain. Histidine 9 serves as the catalytic Tele-phosphohistidine intermediate. One can recognise an HPr domain in the interval 156 to 243 (ARSVSVVIQN…ALAAENFGEP (88 aa)). Histidine 170 functions as the Pros-phosphohistidine intermediate in the catalytic mechanism. The tract at residues 266–472 (PQPQDRISRE…DIPGKRVIRG (207 aa)) is PTS EI-like, N-terminal part. The active-site Tele-phosphohistidine intermediate is histidine 432.

The protein belongs to the PEP-utilizing enzyme family. In terms of assembly, homodimer. The dihydroxyacetone kinase complex is composed of a homodimer of DhaM, a homodimer of DhaK and the subunit DhaL.

It catalyses the reaction dihydroxyacetone + phosphoenolpyruvate = dihydroxyacetone phosphate + pyruvate. Functionally, component of the dihydroxyacetone kinase complex, which is responsible for the phosphoenolpyruvate (PEP)-dependent phosphorylation of dihydroxyacetone. DhaM serves as the phosphoryl donor. Is phosphorylated by phosphoenolpyruvate in an EI- and HPr-dependent reaction, and a phosphorelay system on histidine residues finally leads to phosphoryl transfer to DhaL and dihydroxyacetone. The sequence is that of PEP-dependent dihydroxyacetone kinase, phosphoryl donor subunit DhaM from Klebsiella michiganensis (strain ATCC 8724 / DSM 4798 / JCM 20051 / NBRC 3318 / NRRL B-199 / KCTC 1686 / BUCSAV 143 / CCM 1901).